The primary structure comprises 848 residues: Neurofilament medium polypeptide (848 aa).

Positions 1–10 are enriched in polar residues; the sequence is MSYTLDSLGN. A disordered region spans residues 1 to 51; sequence MSYTLDSLGNPSAYRRVTETRSSFSRVSGSPSSGFRSQSWSRGSPSTVSSS. S2 carries the N-acetylserine modification. Positions 2 to 102 are head; it reads SYTLDSLGNP…KLSRSNEKEQ (101 aa). Residues 21–44 are compositionally biased toward low complexity; it reads RSSFSRVSGSPSSGFRSQSWSRGS. Position 30 is a phosphoserine (S30). Residue R42 is modified to Omega-N-methylarginine. The O-linked (GlcNAc) threonine glycan is linked to T47. S97 is modified (phosphoserine). The 312-residue stretch at 99-410 folds into the IF rod domain; it reads EKEQLQGLND…KLLEGEETRF (312 aa). Residues 103 to 134 form a coil 1A region; sequence LQGLNDRFAGYIEKVHYLEQQNKEIEAEIQAL. The segment at 135–147 is linker 1; it reads RQKQASHAQLGDA. The segment at 148–246 is coil 1B; the sequence is YDQEIRELRA…EEEVADLLAQ (99 aa). At S224 the chain carries Phosphoserine. Residues 247 to 263 are linker 12; sequence IQASHITVERKDYLKTD. The tract at residues 264 to 285 is coil 2A; that stretch reads ISTALKEIRSQLECHSDQNMHQ. The segment at 286–289 is linker 2; it reads AEEW. Residues 290–410 form a coil 2B region; that stretch reads FKCRYAKLTE…KLLEGEETRF (121 aa). Y318 carries the post-translational modification Phosphotyrosine. S344, S416, and S428 each carry phosphoserine. The segment at 411 to 848 is tail; the sequence is STFSGSITGP…AIVKEVTQGD (438 aa). O-linked (GlcNAc) threonine glycosylation occurs at T430. Residues S466 and S482 each carry the phosphoserine modification. The tract at residues 482 to 785 is disordered; it reads SAKEEKEEAE…GEDSSDDKVV (304 aa). Over residues 488-498 the composition is skewed to acidic residues; sequence EEAEEKEEEPE. Over residues 499–509 the composition is skewed to basic and acidic residues; it reads AEKSPVKSPEA. A phosphoserine mark is found at S502 and S506. Over residues 510-533 the composition is skewed to acidic residues; the sequence is KEEEEEGEKEEEEEGQEEEEEEDE. Residues 534-553 are compositionally biased toward basic and acidic residues; that stretch reads GVKSDQAEEGGSEKEGSSEK. S537, S545, S550, and S551 each carry phosphoserine. Over residues 554–576 the composition is skewed to acidic residues; it reads DEGEQEEEEGETEAEGEGEEAEA. At T565 the chain carries Phosphothreonine. Over residues 577 to 604 the composition is skewed to basic and acidic residues; that stretch reads KEEKKIEGKVEEVAVKEEIKVEKPEKAK. Phosphoserine occurs at positions 605 and 610. Basic and acidic residues-rich tracts occupy residues 611 to 677 and 689 to 711; these read PVEE…KAVE and SLEKDTKEEKPQPQEKVKEKAEE. T642 bears the Phosphothreonine mark. Phosphoserine occurs at positions 645, 669, 689, 715, 723, 753, and 769. Composition is skewed to basic and acidic residues over residues 720–732 and 748–760; these read SDRSPQESKKEDI and TQEKGSGREEEKG. The span at 771–785 shows a compositional bias: basic and acidic residues; it reads AEEKKGEDSSDDKVV.

Belongs to the intermediate filament family. As to quaternary structure, forms heterodimers with NEFL; which can further hetero-oligomerize (in vitro). Forms heterodimers with INA (in vitro). There are a number of repeats of the tripeptide K-S-P, NFM is phosphorylated on a number of the serines in this motif. It is thought that phosphorylation of NFM results in the formation of interfilament cross bridges that are important in the maintenance of axonal caliber. Post-translationally, phosphorylation seems to play a major role in the functioning of the larger neurofilament polypeptides (NF-M and NF-H), the levels of phosphorylation being altered developmentally and coincidentally with a change in the neurofilament function. In terms of processing, phosphorylated in the head and rod regions by the PKC kinase PKN1, leading to the inhibition of polymerization. Expressed in the sciatic nerve (at protein level).

Its subcellular location is the cytoplasm. The protein localises to the cytoskeleton. The protein resides in the cell projection. It localises to the axon. Its function is as follows. Neurofilaments usually contain three intermediate filament proteins: NEFL, NEFM, and NEFH which are involved in the maintenance of neuronal caliber. May additionally cooperate with the neuronal intermediate filament proteins PRPH and INA to form neuronal filamentous networks. The polypeptide is Neurofilament medium polypeptide (Nefm) (Mus musculus (Mouse)).